The sequence spans 479 residues: Adenylate kinase 8 (479 aa).

Adenylate kinase regions lie at residues 58 to 258 (PRVV…TYVQ) and 269 to 471 (PKVL…SGII). 67 to 72 (ASGKTT) serves as a coordination point for ATP. Residues 87 to 113 (TKENLLEREFSLLSLEAKKHYQVYKRV) form an NMP 1 region. AMP-binding positions include 140–143 (GIPE), Gln-147, and Arg-203. The tract at residues 177–206 (GKRIDPVTGEIYHTTFDWPPELEIQNRLIQ) is LID 1. An ATP-binding site is contributed by 278-283 (GCGKKL). Positions 298–327 (SCGQLLKEAMAAESSLGDLIEPFFEKRMTV) are NMP 2. AMP contacts are provided by residues 325 to 327 (MTV), 354 to 357 (GFPR), and Gln-361. Residues 391-424 (LRRTDPVTGERFHLMYKPPPTIEVQARLLQNPKD) form an LID 2 region. Residue Arg-392 participates in ATP binding.

The protein belongs to the adenylate kinase family. In terms of assembly, interacts with CFAP45 and CFAP52; CFAP45 and AK8 dimerization may create a cavity at the interface of the dimer that can accommodate AMP.

The protein localises to the cytoplasm. Its subcellular location is the cytosol. It localises to the cytoskeleton. It is found in the cilium axoneme. It catalyses the reaction AMP + ATP = 2 ADP. The enzyme catalyses a 2'-deoxyribonucleoside 5'-diphosphate + ATP = a 2'-deoxyribonucleoside 5'-triphosphate + ADP. The catalysed reaction is a ribonucleoside 5'-diphosphate + ATP = a ribonucleoside 5'-triphosphate + ADP. Nucleoside monophosphate (NMP) kinase that catalyzes the reversible transfer of the terminal phosphate group between nucleoside triphosphates and monophosphates. Has highest activity toward AMP, and weaker activity toward dAMP, CMP and dCMP. Also displays broad nucleoside diphosphate kinase activity. This is Adenylate kinase 8 (Ak8) from Rattus norvegicus (Rat).